Reading from the N-terminus, the 732-residue chain is Glycine--tRNA ligase (732 aa).

A mitochondrion-targeting transit peptide spans 1–27; sequence MRHVLSLVYKCSVFSKQVTVFSNHLRL. The WHEP-TRS domain maps to 61–117; that stretch reads ILAPLRANVKEQGDLVRKLKEEKAPEIDIKKAVAELKTRKKILEDKELSLAPAEDLF. Glu-297 lines the glycine pocket. ATP is bound by residues 329-331 and 340-341; these read RNE and RV. Glu-348 is a binding site for glycine. Residue 453–454 participates in ATP binding; it reads EC. Position 572–574 (572–574) interacts with glycine; it reads EPS. Residue Arg-579 coordinates ATP.

Belongs to the class-II aminoacyl-tRNA synthetase family. As to quaternary structure, homodimer.

It is found in the mitochondrion. The protein localises to the cytoplasm. It localises to the cell projection. Its subcellular location is the axon. The enzyme catalyses tRNA(Gly) + glycine + ATP = glycyl-tRNA(Gly) + AMP + diphosphate. It carries out the reaction 2 ATP + H(+) = P(1),P(4)-bis(5'-adenosyl) tetraphosphate + diphosphate. Catalyzes the ATP-dependent ligation of glycine to the 3'-end of its cognate tRNA, via the formation of an aminoacyl-adenylate intermediate (Gly-AMP). Also produces diadenosine tetraphosphate (Ap4A), a universal pleiotropic signaling molecule needed for cell regulation pathways, by direct condensation of 2 ATPs. Thereby, may play a special role in Ap4A homeostasis. Required for terminal arborization of both dendrites and axons during development. The sequence is that of Glycine--tRNA ligase from Bombyx mori (Silk moth).